Reading from the N-terminus, the 245-residue chain is S-methyl-5'-thioinosine phosphorylase (245 aa).

Phosphate contacts are provided by residues T10 and 52-53 (RH). Substrate is bound at residue M185. Residue T186 participates in phosphate binding. 209–211 (NPA) is a substrate binding site.

It belongs to the PNP/MTAP phosphorylase family. MTAP subfamily. In terms of assembly, homotrimer.

The enzyme catalyses S-methyl-5'-thioinosine + phosphate = 5-(methylsulfanyl)-alpha-D-ribose 1-phosphate + hypoxanthine. It functions in the pathway purine metabolism; purine nucleoside salvage. Functionally, catalyzes the reversible phosphorylation of S-methyl-5'-thioinosine (MTI) to hypoxanthine and 5-methylthioribose-1-phosphate. Involved in the breakdown of S-methyl-5'-thioadenosine (MTA), a major by-product of polyamine biosynthesis. Catabolism of (MTA) occurs via deamination to MTI and phosphorolysis to hypoxanthine. Involved in quorum sensing. This is S-methyl-5'-thioinosine phosphorylase from Pseudomonas aeruginosa (strain ATCC 15692 / DSM 22644 / CIP 104116 / JCM 14847 / LMG 12228 / 1C / PRS 101 / PAO1).